A 417-amino-acid chain; its full sequence is Calreticulin (417 aa).

The N-terminal stretch at 1–17 (MLLSVPLLLGLLGLAVA) is a signal peptide. Positions 18–197 (EPAVYFKEQF…NSQVESGSLE (180 aa)) are N-domain. Q26 lines the Ca(2+) pocket. An N6-acetyllysine modification is found at K48. Ca(2+) contacts are provided by K62 and K64. At K64 the chain carries N6-(2-hydroxyisobutyryl)lysine. A disulfide bridge links C105 with C137. Residues Y109, K111, Y128, and D135 each coordinate an alpha-D-glucoside. K159 carries the post-translational modification N6-acetyllysine. The 1-1 repeat unit spans residues 191-202 (VESGSLEDDWDF). The 4 X approximate repeats stretch occupies residues 191–255 (VESGSLEDDW…DAKKPEDWDE (65 aa)). Residues 193 to 278 (SGSLEDDWDF…PEYKGEWKPR (86 aa)) form a disordered region. The segment at 198–308 (DDWDFLPPKK…YSPDPSIYAY (111 aa)) is P-domain. The span at 207 to 251 (KIKDPDASKPEDWDERAKIDDPTDSKPEDWDKPEHIPDPDAKKPE) shows a compositional bias: basic and acidic residues. K209 is modified (N6-acetyllysine). 6 consecutive repeat copies span residues 210 to 221 (DPDASKPEDWDE), 227 to 238 (DPTDSKPEDWDK), 244 to 255 (DPDAKKPEDWDE), 259 to 269 (GEWEPPVIQNP), 273 to 283 (GEWKPRQIDNP), and 287 to 297 (GTWIHPEIDNP). Residues 237-270 (DKPEHIPDPDAKKPEDWDEEMDGEWEPPVIQNPE) are interaction with PPIB. Positions 252–261 (DWDEEMDGEW) are enriched in acidic residues. A 3 X approximate repeats region spans residues 259–297 (GEWEPPVIQNPEYKGEWKPRQIDNPDYKGTWIHPEIDNP). The tract at residues 309-417 (DNFGVLGLDL…DVPGQAKDEL (109 aa)) is C-domain. An an alpha-D-glucoside-binding site is contributed by D317. Position 328 (D328) interacts with Ca(2+). N344 carries an N-linked (GlcNAc...) asparagine glycan. The segment at 350–417 (TKAAEKQMKD…DVPGQAKDEL (68 aa)) is disordered. Over residues 352 to 379 (AAEKQMKDKQDEEQRLKEEEEDKKRKEE) the composition is skewed to basic and acidic residues. Positions 380-409 (EEAEDKEDDEDKDEDEEDEEDKEEDEEEDV) are enriched in acidic residues. The Prevents secretion from ER motif lies at 414 to 417 (KDEL).

It belongs to the calreticulin family. In terms of assembly, monomer. Component of an EIF2 complex at least composed of CELF1/CUGBP1, CALR, CALR3, EIF2S1, EIF2S2, HSP90B1 and HSPA5. Interacts with PDIA3/ERp57 and SPACA9. Interacts with TRIM21. Interacts with NR3C1. Interacts with PPIB. Interacts (via P-domain) with PDIA5. Interacts with GABARAP. Interacts with HLA-E-B2M and HLA-G-B2M complexes. Interacts with HLA-F. Interacts with CLCC1.

Its subcellular location is the endoplasmic reticulum lumen. The protein resides in the cytoplasm. It localises to the cytosol. It is found in the secreted. The protein localises to the extracellular space. Its subcellular location is the extracellular matrix. The protein resides in the cell surface. It localises to the sarcoplasmic reticulum lumen. It is found in the cytoplasmic vesicle. The protein localises to the secretory vesicle. Its subcellular location is the cortical granule. The protein resides in the cytolytic granule. In terms of biological role, calcium-binding chaperone that promotes folding, oligomeric assembly and quality control in the endoplasmic reticulum (ER) via the calreticulin/calnexin cycle. This lectin interacts transiently with almost all of the monoglucosylated glycoproteins that are synthesized in the ER. Interacts with the DNA-binding domain of NR3C1 and mediates its nuclear export. Involved in maternal gene expression regulation. May participate in oocyte maturation via the regulation of calcium homeostasis. Present in the cortical granules of non-activated oocytes, is exocytosed during the cortical reaction in response to oocyte activation and might participate in the block to polyspermy. The protein is Calreticulin of Homo sapiens (Human).